A 418-amino-acid polypeptide reads, in one-letter code: Galactooligosaccharides transport system permease protein GanP (418 aa).

Helical transmembrane passes span 25–45 (IKGI…GDLL), 65–85 (VFLL…LAVY), 129–149 (LFIL…LAFT), 191–211 (VVWT…LAII), 226–246 (ILIL…AGLF), 279–299 (LILM…TGVL), 323–343 (YITL…QFTF), 357–379 (GGPA…IYKL), and 388–408 (LAAA…LWQF). One can recognise an ABC transmembrane type-1 domain in the interval 187 to 407 (LAWTVVWTLA…VFVISIALWQ (221 aa)).

It belongs to the binding-protein-dependent transport system permease family. As to quaternary structure, the complex is composed of two ATP-binding proteins (MsmX), two transmembrane proteins (GanP and GanQ) and a solute-binding protein (GanS).

The protein localises to the cell membrane. Involved in galactan degradation. Part of the ABC transporter complex GanPQS involved in the uptake of galactooligosaccharides. Responsible for the translocation of the substrate across the membrane. In Bacillus subtilis (strain 168), this protein is Galactooligosaccharides transport system permease protein GanP (ganP).